Reading from the N-terminus, the 459-residue chain is Flavin-containing monooxygenase FMO GS-OX5 (459 aa).

17-22 is a binding site for FAD; it reads GAGAAG. NADP(+) is bound at residue 212 to 217; the sequence is GNFASG.

The protein belongs to the FMO family.

It carries out the reaction a (Z)-omega-(methylsulfanyl)-N-sulfo-alkylhydroximate S-glucoside + NADPH + O2 + H(+) = a (Z)-omega-(methylsulfinyl)-alkyl-glucosinolate + NADP(+) + H2O. Catalyzes the conversion of methylthioalkyl glucosinolates into methylsulfinylalkyl glucosinolates. Specific for 8-methylthiooctyl (8-MTO) glucosinolates. This Arabidopsis thaliana (Mouse-ear cress) protein is Flavin-containing monooxygenase FMO GS-OX5 (FMOGS-OX5).